A 238-amino-acid polypeptide reads, in one-letter code: DNA repair protein RecO (238 aa).

Belongs to the RecO family.

Its function is as follows. Involved in DNA repair and RecF pathway recombination. This Flavobacterium psychrophilum (strain ATCC 49511 / DSM 21280 / CIP 103535 / JIP02/86) protein is DNA repair protein RecO.